Consider the following 146-residue polypeptide: Large ribosomal subunit protein uL13 (146 aa).

It belongs to the universal ribosomal protein uL13 family. In terms of assembly, part of the 50S ribosomal subunit.

In terms of biological role, this protein is one of the early assembly proteins of the 50S ribosomal subunit, although it is not seen to bind rRNA by itself. It is important during the early stages of 50S assembly. In Bdellovibrio bacteriovorus (strain ATCC 15356 / DSM 50701 / NCIMB 9529 / HD100), this protein is Large ribosomal subunit protein uL13.